The primary structure comprises 164 residues: Decoration protein (164 aa).

A binding to the capsid hexamer region spans residues 1-72 (MIDYSGLRTI…AIPPAPPAPP (72 aa)). One can recognise an Ig-like domain in the interval 71–164 (PPLTLSKDLT…VTVNPTVPGG (94 aa)).

In terms of assembly, interacts with the major capsid protein; each hexon binds a single copy of the decoration protein.

It localises to the virion. Decoration protein that binds asymmetrically to the center of each capsid protein hexamer after capsid expansion. Stabilizes the capsid and protects from DNA release. In Escherichia phage T5 (Enterobacteria phage T5), this protein is Decoration protein.